A 1170-amino-acid chain; its full sequence is MTPIPYAEIGVTTNFSFLHGGSHPQAYVHQAAEYGLTAIGIADHNTLAGIVRAYSELSNDQLGYRPKLLYGARLVFTCGTPDILVYPRDRAAYGRLCQLLTRGKRGSDLDKVAKGDCRLAFEDLFDFIAGQLLVLMPPHRFDEDALGAILARLKDSPAEGVWLAGSLLYRGDDRRRLARLARLAASAKVPLIATNDVLYHHPQQRMLQDVLTCIREKASIESIGRRLQANAERHLKPGHEMARLFRDHPEAIAETLRFTDRIVFSLDQLKYQYPDEPVPPGKTAQGHLEDLTWAGAKTYFGDKLDDRLRAVLNKELALIAELNYAHYFLTVHDIVRYARSEGILCQGRGSAANSAVCYVLGITSVDPTKIDLLFERFISKERLEPPDIDVDFEHSRREEVMQYVYHRYGRHRAAIIATVIHYRPRSAIRDVGKALGLTEDVTSVLADTVWGSWGDGLSDMQVRQAGLDPHNPMIRRAVELASELITFPRHLSQHVGGYVLTQDRLDSYVPIGNAAMDDRTFIEWDKDDVDALSMMKVDVLALGMLTCIRKSFDLIADHKGRRYVLSDIKSEDDNEVYQMLQRGESLGVFQVESRAQMNMLPRLKPRTFYDLVIEVAIVRPGPIQGDMVHPYLRRRNKLEKVTYPSPSPDHGPSDELYKVLHKTLGVPLFQEQAMRIAIEAAKFSPEEANGLRRAMATFRNVGTIGSYEEKMVSNMIARGYDPAFAKSCFDQIKGFGSYGFPESHAASFAQLVYVSSWLKYFHPDAFCCALLNSQPMGFYAPAQIVGDARKNGVEIRDIDVSHSFADNTLEKTDGEYCAVRLGFRQIDGFRWIDRDEERIRKLSEAVRKEALSVSTRSLPAISPVSFRGARSANPESRDSGFALRAPRNDNDRQIPLHNDDREDDWADRIIRARQRRPFTSLEDFARDTALPKRALLLLADADAFRSLGLDRRAALWAVRRLPDDVPLPLFEAAIAREQPDEGAQPLPEMPLPEHVVADYQTIRLSLKGHPMEFLRRRFAAEGVLACRDVNDTNDRRRIRCAGVVLVRQRPGSAKGVVFMTLEDETGIANIVVWPKVMETFRKEVMGARLVLVEGRIQSSPEKVVHLVAERLVDRTADLTLLSDDRLDAIPHGATPAEPLNDDRRDHTDNPSQRVSHPRNVRILPRSRDFH.

Disordered regions lie at residues 867-899 (RGAR…LHND) and 1129-1170 (IPHG…RDFH). Positions 886–899 (PRNDNDRQIPLHND) are enriched in basic and acidic residues.

It belongs to the DNA polymerase type-C family. DnaE2 subfamily.

Its subcellular location is the cytoplasm. It carries out the reaction DNA(n) + a 2'-deoxyribonucleoside 5'-triphosphate = DNA(n+1) + diphosphate. In terms of biological role, DNA polymerase involved in damage-induced mutagenesis and translesion synthesis (TLS). It is not the major replicative DNA polymerase. The chain is Error-prone DNA polymerase from Bradyrhizobium sp. (strain ORS 278).